A 489-amino-acid polypeptide reads, in one-letter code: Lysine--tRNA ligase (489 aa).

The Mg(2+) site is built by Glu399 and Glu406.

The protein belongs to the class-II aminoacyl-tRNA synthetase family. As to quaternary structure, homodimer. Requires Mg(2+) as cofactor.

Its subcellular location is the cytoplasm. The enzyme catalyses tRNA(Lys) + L-lysine + ATP = L-lysyl-tRNA(Lys) + AMP + diphosphate. The sequence is that of Lysine--tRNA ligase (lysS) from Mycoplasma pneumoniae (strain ATCC 29342 / M129 / Subtype 1) (Mycoplasmoides pneumoniae).